Here is a 744-residue protein sequence, read N- to C-terminus: Probable methylmalonyl-CoA mutase, mitochondrial (744 aa).

In terms of domain architecture, B12-binding spans glutamine 605 to alanine 737. Histidine 618 serves as a coordination point for adenosylcob(III)alamin.

Belongs to the methylmalonyl-CoA mutase family. In terms of assembly, homodimer. Requires adenosylcob(III)alamin as cofactor.

The protein resides in the mitochondrion matrix. It carries out the reaction (R)-methylmalonyl-CoA = succinyl-CoA. In terms of biological role, involved, in man, in the degradation of several amino acids, odd-chain fatty acids and cholesterol via propionyl-CoA to the tricarboxylic acid cycle. MCM has different functions in other species. The protein is Probable methylmalonyl-CoA mutase, mitochondrial (mmcm-1) of Caenorhabditis elegans.